Reading from the N-terminus, the 63-residue chain is Large ribosomal subunit protein bL32 (63 aa).

The span at M1–R16 shows a compositional bias: basic residues. Positions M1–I22 are disordered.

The protein belongs to the bacterial ribosomal protein bL32 family.

This is Large ribosomal subunit protein bL32 from Beijerinckia indica subsp. indica (strain ATCC 9039 / DSM 1715 / NCIMB 8712).